We begin with the raw amino-acid sequence, 547 residues long: Serine beta-lactamase-like protein LACTB, mitochondrial (547 aa).

The transit peptide at 1-115 (MYRLMSAVTA…RAIESSRDLL (115 aa)) directs the protein to the mitochondrion. Residues 62–83 (GAAPAQSPAAPDPEASPLAEPP) show a composition bias toward low complexity. Residues 62 to 96 (GAAPAQSPAAPDPEASPLAEPPQEQSLAPWSPQTP) are disordered. Catalysis depends on serine 164, which acts as the Acyl-ester intermediate. Lysine 283 and lysine 284 each carry N6-succinyllysine. Lysine 297 and lysine 342 each carry N6-acetyllysine.

Belongs to the peptidase S12 family. In terms of tissue distribution, expressed predominantly in skeletal muscle.

It localises to the mitochondrion. Functionally, mitochondrial serine protease that acts as a regulator of mitochondrial lipid metabolism. Acts by decreasing protein levels of PISD, a mitochondrial enzyme that converts phosphatidylserine (PtdSer) to phosphatidylethanolamine (PtdEtn), thereby affecting mitochondrial lipid metabolism. It is unclear whether it acts directly by mediating proteolysis of PISD or by mediating proteolysis of another lipid metabolism protein. Acts as a tumor suppressor that has the ability to inhibit proliferation of multiple types of breast cancer cells: probably by promoting decreased levels of PISD, thereby affecting mitochondrial lipid metabolism. The polypeptide is Serine beta-lactamase-like protein LACTB, mitochondrial (Homo sapiens (Human)).